A 159-amino-acid chain; its full sequence is Ribosome maturation factor RimP (159 aa).

Belongs to the RimP family.

It is found in the cytoplasm. Functionally, required for maturation of 30S ribosomal subunits. The protein is Ribosome maturation factor RimP of Streptococcus agalactiae serotype III (strain NEM316).